The primary structure comprises 306 residues: HORMA domain-containing protein 2 (306 aa).

The 204-residue stretch at 29 to 232 (HESLVVVKKL…SGFHSMKVKV (204 aa)) folds into the HORMA domain. At S271 the chain carries Phosphoserine.

Interacts with HORMAD1. Phosphorylated in a SPO11-dependent manner. Specifically expressed in meiotic germ cells.

The protein localises to the nucleus. It localises to the chromosome. In terms of biological role, essential for synapsis surveillance during meiotic prophase via the recruitment of ATR activity. Plays a key role in the male mid-pachytene checkpoint and the female meiotic prophase checkpoint: required for efficient build-up of ATR activity on unsynapsed chromosome regions, a process believed to form the basis of meiotic silencing of unsynapsed chromatin (MSUC) and meiotic prophase quality control in both sexes. Required for the DNA double-strand break-independent, BRCA1-dependent activation of ATR on the sex chromosomes that is essential for normal sex body formation. The sequence is that of HORMA domain-containing protein 2 (Hormad2) from Mus musculus (Mouse).